The sequence spans 244 residues: Ribonuclease PH (244 aa).

Residues R86 and 124–126 contribute to the phosphate site; that span reads GTR.

It belongs to the RNase PH family. Homohexameric ring arranged as a trimer of dimers.

The catalysed reaction is tRNA(n+1) + phosphate = tRNA(n) + a ribonucleoside 5'-diphosphate. In terms of biological role, phosphorolytic 3'-5' exoribonuclease that plays an important role in tRNA 3'-end maturation. Removes nucleotide residues following the 3'-CCA terminus of tRNAs; can also add nucleotides to the ends of RNA molecules by using nucleoside diphosphates as substrates, but this may not be physiologically important. Probably plays a role in initiation of 16S rRNA degradation (leading to ribosome degradation) during starvation. The protein is Ribonuclease PH of Oceanobacillus iheyensis (strain DSM 14371 / CIP 107618 / JCM 11309 / KCTC 3954 / HTE831).